The sequence spans 429 residues: Trigger factor (429 aa).

In terms of domain architecture, PPIase FKBP-type spans Glu-161 to Pro-246.

This sequence belongs to the FKBP-type PPIase family. Tig subfamily. As to quaternary structure, homodimer and monomer. In vivo most of the ribosomes are in complex with monomeric TF. Uncomplexed TF, however, is in a monomer-dimer equilibrium with approximately two thirds of TF existing in a dimeric state.

The protein localises to the cytoplasm. It carries out the reaction [protein]-peptidylproline (omega=180) = [protein]-peptidylproline (omega=0). Functionally, involved in protein export. Acts as a chaperone by maintaining the newly synthesized protein in an open conformation. Functions as a peptidyl-prolyl cis-trans isomerase. This is Trigger factor from Escherichia coli O45:K1 (strain S88 / ExPEC).